Reading from the N-terminus, the 467-residue chain is Constitutive acid phosphatase (467 aa).

Positions 1–17 (MFKSVVYSVLAAALVNA) are cleaved as a signal peptide. His75 functions as the Nucleophile in the catalytic mechanism. N-linked (GlcNAc...) asparagine glycans are attached at residues Asn97, Asn103, Asn162, Asn192, Asn250, and Asn315. Asp338 acts as the Proton donor in catalysis. N-linked (GlcNAc...) asparagine glycosylation is found at Asn356, Asn390, Asn439, Asn445, Asn456, and Asn461.

This sequence belongs to the histidine acid phosphatase family.

The catalysed reaction is a phosphate monoester + H2O = an alcohol + phosphate. This chain is Constitutive acid phosphatase (PHO3), found in Saccharomyces cerevisiae (strain ATCC 204508 / S288c) (Baker's yeast).